Here is a 382-residue protein sequence, read N- to C-terminus: MKALHFGAGNIGRGFIGKLLADAGIQLTFADVNQVVLDALNARHSYQVHVVGENEQVDTVSGVNAVSSIGDDVVDLIAHVDLITTAVGPVVLERIAPAIAKGLVKRKAQGVDAPLNIIACENMVRGTTQLKGHVMNALADGDKAWVEQHVGFVDSAVDRIVPPSASATHDPLEVTVETFSEWIVDKTQFKGALPTIPGMELTDNLMAFVERKLFTLNTGHAITAYLGKLAGHQTIRDAILDESIRAVVKGAMEESGAVLIKRYGFDADKHAAYIQKILGRFENPYLKDDVERVGRQPLRKLSAGDRLIKPLLGTLEYGLPHVNLVKGIAAAMHFRSDEDPQAQELAALITEKGPQAALAQISGLDANSDVVAEAVNAYNATK.

Residue 3–14 (ALHFGAGNIGRG) participates in NAD(+) binding.

Belongs to the mannitol dehydrogenase family.

The enzyme catalyses D-mannitol 1-phosphate + NAD(+) = beta-D-fructose 6-phosphate + NADH + H(+). The protein is Mannitol-1-phosphate 5-dehydrogenase of Salmonella dublin (strain CT_02021853).